A 385-amino-acid polypeptide reads, in one-letter code: Mannitol-1-phosphate 5-dehydrogenase (385 aa).

Position 3-14 (A3–G14) interacts with NAD(+).

The protein belongs to the mannitol dehydrogenase family.

It carries out the reaction D-mannitol 1-phosphate + NAD(+) = beta-D-fructose 6-phosphate + NADH + H(+). This chain is Mannitol-1-phosphate 5-dehydrogenase, found in Pasteurella multocida (strain Pm70).